Consider the following 247-residue polypeptide: 3,4-dihydroxy-2-butanone 4-phosphate synthase (247 aa).

D-ribulose 5-phosphate is bound by residues 38–39 (RE), Asp-43, 179–183 (RMGQT), and Glu-203. Glu-39 provides a ligand contact to Mg(2+).

The protein belongs to the DHBP synthase family. In terms of assembly, homodimer. The cofactor is Mg(2+). Mn(2+) is required as a cofactor.

The enzyme catalyses D-ribulose 5-phosphate = (2S)-2-hydroxy-3-oxobutyl phosphate + formate + H(+). It participates in cofactor biosynthesis; riboflavin biosynthesis; 2-hydroxy-3-oxobutyl phosphate from D-ribulose 5-phosphate: step 1/1. Catalyzes the conversion of D-ribulose 5-phosphate to formate and 3,4-dihydroxy-2-butanone 4-phosphate. The chain is 3,4-dihydroxy-2-butanone 4-phosphate synthase from Methanosarcina acetivorans (strain ATCC 35395 / DSM 2834 / JCM 12185 / C2A).